Here is a 415-residue protein sequence, read N- to C-terminus: Mannosylglycerate hydrolase (415 aa).

Substrate-binding positions include Y23, 27 to 30, Y76, Q98, and G158; that span reads WLWD. Catalysis depends on D160, which acts as the Proton donor. Substrate contacts are provided by residues R193 and 344 to 345; that span reads YW. E388 functions as the Proton acceptor in the catalytic mechanism.

The protein belongs to the glycosyl hydrolase 63 family. In terms of assembly, homotetramer in solution.

The catalysed reaction is (2R)-2-O-(alpha-D-mannosyl)-glycerate + H2O = D-mannose + (R)-glycerate. The enzyme catalyses (2R)-2-O-(alpha-D-glucopyranosyl)-glycerate + H2O = (R)-glycerate + D-glucose. Activity is not stimulated by divalent cations and not affected in the presence of EDTA. In terms of biological role, hydrolase that catalyzes the hydrolysis of mannosylglycerate (MG), a solute produced in response to osmotic stress in thermophiles, into mannose and glycerate. Can also hydrolyze glucosylglycerate (GG) to glucose and glycerate, with similar catalytic efficiency. Is highly specific for MG and GG, and cannot use mannosylglyceramide (MGA), glucosylglycerol, mannosylglucosylglycerate (MGG), glucosylglucosylglycerate (GGG) or trehalose as substrates. The chain is Mannosylglycerate hydrolase from Thermus thermophilus (strain ATCC BAA-163 / DSM 7039 / HB27).